The following is a 78-amino-acid chain: Acyl carrier protein (78 aa).

Residues 2–77 form the Carrier domain; it reads DDLFKKIQQL…DAYEFIKSQQ (76 aa). S37 carries the O-(pantetheine 4'-phosphoryl)serine modification.

This sequence belongs to the acyl carrier protein (ACP) family. 4'-phosphopantetheine is transferred from CoA to a specific serine of apo-ACP by AcpS. This modification is essential for activity because fatty acids are bound in thioester linkage to the sulfhydryl of the prosthetic group.

It localises to the cytoplasm. It functions in the pathway lipid metabolism; fatty acid biosynthesis. Its function is as follows. Carrier of the growing fatty acid chain in fatty acid biosynthesis. This is Acyl carrier protein from Treponema denticola (strain ATCC 35405 / DSM 14222 / CIP 103919 / JCM 8153 / KCTC 15104).